The primary structure comprises 122 residues: Large ribosomal subunit protein uL14 (122 aa).

The protein belongs to the universal ribosomal protein uL14 family. As to quaternary structure, part of the 50S ribosomal subunit. Forms a cluster with proteins L3 and L19. In the 70S ribosome, L14 and L19 interact and together make contacts with the 16S rRNA in bridges B5 and B8.

In terms of biological role, binds to 23S rRNA. Forms part of two intersubunit bridges in the 70S ribosome. The protein is Large ribosomal subunit protein uL14 of Aeromonas salmonicida (strain A449).